The primary structure comprises 305 residues: Protoheme IX farnesyltransferase (305 aa).

Helical transmembrane passes span 31 to 51 (VMSL…YSVH), 52 to 72 (PFIA…AGAI), 102 to 119 (ALSF…FMAL), 123 to 145 (LLAS…IWLK), 151 to 171 (NIVI…AAVS), 179 to 199 (IILF…LALF), 218 to 238 (ILYT…VSLM), 240 to 260 (FFIG…GLVF), and 281 to 301 (FAYS…TSTI).

The protein belongs to the UbiA prenyltransferase family. Protoheme IX farnesyltransferase subfamily.

Its subcellular location is the cell inner membrane. It carries out the reaction heme b + (2E,6E)-farnesyl diphosphate + H2O = Fe(II)-heme o + diphosphate. It participates in porphyrin-containing compound metabolism; heme O biosynthesis; heme O from protoheme: step 1/1. Functionally, converts heme B (protoheme IX) to heme O by substitution of the vinyl group on carbon 2 of heme B porphyrin ring with a hydroxyethyl farnesyl side group. The protein is Protoheme IX farnesyltransferase of Rickettsia akari (strain Hartford).